The chain runs to 254 residues: Alcohol dehydrogenase (254 aa).

Residue 10–33 (FVAGLGGIGLDTSREIVKSGPKNL) coordinates NAD(+). Position 138 (Ser138) interacts with substrate. Residue Tyr151 is the Proton acceptor of the active site.

The protein belongs to the short-chain dehydrogenases/reductases (SDR) family. As to quaternary structure, homodimer.

It catalyses the reaction a primary alcohol + NAD(+) = an aldehyde + NADH + H(+). It carries out the reaction a secondary alcohol + NAD(+) = a ketone + NADH + H(+). This chain is Alcohol dehydrogenase (Adh1), found in Drosophila lacicola (Fruit fly).